The primary structure comprises 431 residues: GTPase Obg (431 aa).

One can recognise an Obg domain in the interval 1 to 158; the sequence is MFVDQVKVDV…LTIRMELKVL (158 aa). Residues 159–335 form the OBG-type G domain; the sequence is ADVGLVGFPS…LLAKTADLLD (177 aa). Residues 165–172, 190–194, 212–215, 282–285, and 316–318 each bind GTP; these read GFPSVGKS, FTTLV, DLPG, TKMD, and SSI. The Mg(2+) site is built by Ser172 and Thr192. Residues 353-431 form the OCT domain; that stretch reads YTTEADADFS…ILDYSFQFMD (79 aa).

Belongs to the TRAFAC class OBG-HflX-like GTPase superfamily. OBG GTPase family. Monomer. Requires Mg(2+) as cofactor.

The protein resides in the cytoplasm. In terms of biological role, an essential GTPase which binds GTP, GDP and possibly (p)ppGpp with moderate affinity, with high nucleotide exchange rates and a fairly low GTP hydrolysis rate. Plays a role in control of the cell cycle, stress response, ribosome biogenesis and in those bacteria that undergo differentiation, in morphogenesis control. This Lactiplantibacillus plantarum (strain ATCC BAA-793 / NCIMB 8826 / WCFS1) (Lactobacillus plantarum) protein is GTPase Obg.